Here is a 103-residue protein sequence, read N- to C-terminus: Large ribosomal subunit protein bL21 (103 aa).

It belongs to the bacterial ribosomal protein bL21 family. Part of the 50S ribosomal subunit. Contacts protein L20.

Functionally, this protein binds to 23S rRNA in the presence of protein L20. The polypeptide is Large ribosomal subunit protein bL21 (Thioalkalivibrio sulfidiphilus (strain HL-EbGR7)).